A 209-amino-acid polypeptide reads, in one-letter code: Glutathione S-transferase 2 (209 aa).

Positions 1–81 (MLDFYYLPGS…YLCDQYGDED (81 aa)) constitute a GST N-terminal domain. Glutathione-binding positions include Ser-10, 51–53 (RTI), and 65–67 (ESR). A GST C-terminal domain is found at 88 to 209 (DTIQRAIVNQ…SGAKEFLTYK (122 aa)).

It belongs to the GST superfamily. Theta family. Homodimer.

The enzyme catalyses RX + glutathione = an S-substituted glutathione + a halide anion + H(+). Functionally, conjugation of reduced glutathione to a wide number of exogenous and endogenous hydrophobic electrophiles. This chain is Glutathione S-transferase 2 (GstD2), found in Anopheles gambiae (African malaria mosquito).